A 98-amino-acid chain; its full sequence is Cystatin-B (98 aa).

Met-1 carries the post-translational modification N-acetylmethionine. The Secondary area of contact signature appears at 46 to 50 (QVVAG).

The protein belongs to the cystatin family.

Its subcellular location is the cytoplasm. Functionally, this is an intracellular thiol proteinase inhibitor. The sequence is that of Cystatin-B (CSTB) from Sus scrofa (Pig).